Here is a 336-residue protein sequence, read N- to C-terminus: Acetaldehyde dehydrogenase 1 (336 aa).

32–35 (SGVV) provides a ligand contact to NAD(+). Cys150 (acyl-thioester intermediate) is an active-site residue. Asn309 contributes to the NAD(+) binding site.

The protein belongs to the acetaldehyde dehydrogenase family.

It catalyses the reaction acetaldehyde + NAD(+) + CoA = acetyl-CoA + NADH + H(+). This is Acetaldehyde dehydrogenase 1 (mhpF) from Mycobacterium ulcerans (strain Agy99).